The chain runs to 776 residues: MTISADQVNQIAWNHHHDPFQVLGSHQIELSGKTMTVIRAYQPSAEAVSVISPIDRKEYPMQSVHNPHFFECVINTPKLANYQLKIKEGEHERVIHDPYAFRSAKLTEFDLQLFGEGNHHRIYEKLGAHITEVDGIKGVYFAVWAPNARNVSILGNFNYWDGRKHQMRKGHTGVWELFIPDIGPGESYKYEVKNWEGHIYEKSDPYGYQQEVRPKTASIVVDLDSYTWNDQEWMEKRRHTDPLTQPISVYECHFGSWIHASAHEPAKLPNGETEPVVQVSELRPDARFLTYRELADRLVSYVKDLGYTHIEMLPVAEHPFDGSWGYQVTGFFAPTSRYGSAQDFMYFVDKCHENGIGVIVDWVPGHFPKDGHGLAFFDGTHLYEHPDPRKGEHKQWGTLVFDYGRNEVRNFLAANALFWFDKYHIDGVRVDAVASMVYHNYMRPDGEWVANKYGGVEYIEAADFLRQVNHLLFSYYPGVLSIAEESTSWPMVTWPTYVGGLGFNFKWNMGWMHDMLDYFEMDPWFRQFHQNNVTFSIWYHHTENYMLALSHDEVVHCKSSILGKMPGDNWQKFANVRALFAYMFTHPGKKTMFMGMELPQWGEWDVWGDLEWHLLEFDAHQGMKRFFRDLNHLYCSEPALYEQDCNEGGFEWIDCNDNNHSVVSFIRRAKDGKDFVVTVCNFTPQPHSHYRVGVPEPGFYTEIFNSDAGNYGGSNMGNLGGKWTDDWFFHDYQQSLDLCLPPLGVVVFQLDKKKTIAMIQESEDVETVEAKAKNAS.

D431 serves as the catalytic Nucleophile. E484 serves as the catalytic Proton donor.

This sequence belongs to the glycosyl hydrolase 13 family. GlgB subfamily. Monomer.

It catalyses the reaction Transfers a segment of a (1-&gt;4)-alpha-D-glucan chain to a primary hydroxy group in a similar glucan chain.. The protein operates within glycan biosynthesis; glycogen biosynthesis. Its function is as follows. Catalyzes the formation of the alpha-1,6-glucosidic linkages in glycogen by scission of a 1,4-alpha-linked oligosaccharide from growing alpha-1,4-glucan chains and the subsequent attachment of the oligosaccharide to the alpha-1,6 position. The chain is 1,4-alpha-glucan branching enzyme GlgB from Trichodesmium erythraeum (strain IMS101).